A 75-amino-acid polypeptide reads, in one-letter code: Sec-independent protein translocase protein TatA (75 aa).

The helical transmembrane segment at Met1 to Gly21 threads the bilayer. The interval Asp45 to Ser75 is disordered.

Belongs to the TatA/E family. The Tat system comprises two distinct complexes: a TatABC complex, containing multiple copies of TatA, TatB and TatC subunits, and a separate TatA complex, containing only TatA subunits. Substrates initially bind to the TatABC complex, which probably triggers association of the separate TatA complex to form the active translocon.

It localises to the cell inner membrane. Part of the twin-arginine translocation (Tat) system that transports large folded proteins containing a characteristic twin-arginine motif in their signal peptide across membranes. TatA could form the protein-conducting channel of the Tat system. This chain is Sec-independent protein translocase protein TatA, found in Bordetella bronchiseptica (strain ATCC BAA-588 / NCTC 13252 / RB50) (Alcaligenes bronchisepticus).